The primary structure comprises 290 residues: Pyridoxal kinase PdxY (290 aa).

Substrate-binding positions include Ser12 and 47 to 48 (TQ). Residues Asp114, Glu151, Lys184, and 211–214 (RPLL) each bind ATP. Asp225 contributes to the substrate binding site.

It belongs to the pyridoxine kinase family. PdxY subfamily. In terms of assembly, homodimer. It depends on Mg(2+) as a cofactor.

It catalyses the reaction pyridoxal + ATP = pyridoxal 5'-phosphate + ADP + H(+). It functions in the pathway cofactor metabolism; pyridoxal 5'-phosphate salvage; pyridoxal 5'-phosphate from pyridoxal: step 1/1. Its function is as follows. Pyridoxal kinase involved in the salvage pathway of pyridoxal 5'-phosphate (PLP). Catalyzes the phosphorylation of pyridoxal to PLP. This chain is Pyridoxal kinase PdxY, found in Pseudomonas fluorescens (strain ATCC BAA-477 / NRRL B-23932 / Pf-5).